A 308-amino-acid polypeptide reads, in one-letter code: Transaldolase (308 aa).

Residue Lys125 is the Schiff-base intermediate with substrate of the active site.

Belongs to the transaldolase family. Type 1 subfamily. As to quaternary structure, homodimer.

The protein localises to the cytoplasm. The enzyme catalyses D-sedoheptulose 7-phosphate + D-glyceraldehyde 3-phosphate = D-erythrose 4-phosphate + beta-D-fructose 6-phosphate. It functions in the pathway carbohydrate degradation; pentose phosphate pathway; D-glyceraldehyde 3-phosphate and beta-D-fructose 6-phosphate from D-ribose 5-phosphate and D-xylulose 5-phosphate (non-oxidative stage): step 2/3. Its function is as follows. Transaldolase is important for the balance of metabolites in the pentose-phosphate pathway. The chain is Transaldolase from Pseudomonas fluorescens (strain ATCC BAA-477 / NRRL B-23932 / Pf-5).